Reading from the N-terminus, the 300-residue chain is Haloalkane dehalogenase (300 aa).

An AB hydrolase-1 domain is found at alanine 32–phenylalanine 155. Aspartate 109 functions as the Nucleophile in the catalytic mechanism. Glutamate 133 serves as the catalytic Proton donor. Histidine 273 functions as the Proton acceptor in the catalytic mechanism.

Belongs to the haloalkane dehalogenase family. Type 2 subfamily. In terms of assembly, monomer.

The enzyme catalyses 1-haloalkane + H2O = a halide anion + a primary alcohol + H(+). Catalyzes hydrolytic cleavage of carbon-halogen bonds in halogenated aliphatic compounds, leading to the formation of the corresponding primary alcohols, halide ions and protons. In Mycobacterium bovis (strain BCG / Pasteur 1173P2), this protein is Haloalkane dehalogenase.